Consider the following 350-residue polypeptide: Dihydroorotase (350 aa).

Residues histidine 17 and histidine 19 each coordinate Zn(2+). Residues histidine 19–arginine 21 and asparagine 45 contribute to the substrate site. Residues lysine 103, histidine 140, and histidine 178 each contribute to the Zn(2+) site. An N6-carboxylysine modification is found at lysine 103. Residue histidine 140 coordinates substrate. Leucine 223 contacts substrate. Aspartate 251 contributes to the Zn(2+) binding site. The active site involves aspartate 251. Residues histidine 255 and alanine 267 each contribute to the substrate site.

This sequence belongs to the metallo-dependent hydrolases superfamily. DHOase family. Class II DHOase subfamily. As to quaternary structure, homodimer. Requires Zn(2+) as cofactor.

The catalysed reaction is (S)-dihydroorotate + H2O = N-carbamoyl-L-aspartate + H(+). It functions in the pathway pyrimidine metabolism; UMP biosynthesis via de novo pathway; (S)-dihydroorotate from bicarbonate: step 3/3. Its function is as follows. Catalyzes the reversible cyclization of carbamoyl aspartate to dihydroorotate. The sequence is that of Dihydroorotase from Erwinia tasmaniensis (strain DSM 17950 / CFBP 7177 / CIP 109463 / NCPPB 4357 / Et1/99).